Here is a 474-residue protein sequence, read N- to C-terminus: Receptor-transporting protein 3 (474 aa).

Residues 1–453 (MMEEDIGDTE…SCCEAACNCM (453 aa)) are Cytoplasmic-facing. The 3CxxC-type zinc finger occupies 53–164 (TFARFHCPSC…SSNCEACLLG (112 aa)). Residues 175-304 (SKPPAPPLSP…ISCTSKPSTT (130 aa)) are disordered. 2 stretches are compositionally biased toward polar residues: residues 197–228 (VTCS…NPTK) and 259–304 (VTCS…PSTT). The chain crosses the membrane as a helical span at residues 454–474 (SQSPLCCLAFLILFLLLWYLL).

The protein belongs to the TMEM7 family. As to quaternary structure, interacts with TAS2R16. As to expression, expressed predominantly in the liver. Not detected in the olfactory epithelium.

It is found in the membrane. Promotes functional cell surface expression of the bitter taste receptors TAS2R16 and TAS2R43. The sequence is that of Receptor-transporting protein 3 (Rtp3) from Mus musculus (Mouse).